Consider the following 346-residue polypeptide: Membrane progestin receptor alpha (346 aa).

The Cytoplasmic segment spans residues 1–72 (MAMAQKLSHL…RTLFQQHNEA (72 aa)). Residues 73 to 93 (VNVWTHLLAALVLLLRLALFV) traverse the membrane as a helical segment. The Extracellular segment spans residues 94-103 (ETVDFWGDPH). Residues 104–124 (ALPLFIIVLASFTYLSFSALA) traverse the membrane as a helical segment. The Cytoplasmic segment spans residues 125–137 (HLLQAKSEFWHYS). A helical transmembrane segment spans residues 138–158 (FFFLDYVGVAVYQFGSALAHF). Residues 159 to 169 (YYAIEPAWHAQ) are Extracellular-facing. A helical membrane pass occupies residues 170 to 190 (VQAVFLPMAAFLAWLSCIGSC). Residues 191–237 (YNKYIQKPGLLGRTCQEVPSVLAYALDISPVVHRIFVSSDPTTDDPA) are Cytoplasmic-facing. Residues 238–258 (LLYHKCQVVFFLLAAAFFSTF) form a helical membrane-spanning segment. Residues 259 to 276 (MPERWFPGSCHVFGQGHQ) lie on the Extracellular side of the membrane. Residues 277–297 (LFHIFLVLCTLAQLEAVALDY) traverse the membrane as a helical segment. Topologically, residues 298 to 316 (EARRPIYEPLHTHWPHNFS) are cytoplasmic. A helical transmembrane segment spans residues 317–337 (GLFLLTVGSSILTAFLLSQLV). At 338 to 346 (QRKLDQKTK) the chain is on the extracellular side.

It belongs to the ADIPOR family. Expressed in a wide range of tissues including ovary, testis, placenta, uterus and bladder.

It is found in the cell membrane. Plasma membrane progesterone (P4) receptor coupled to G proteins. Seems to act through a G(i) mediated pathway. May be involved in oocyte maturation. Involved in neurosteroid inhibition of apoptosis. Also binds dehydroepiandrosterone (DHEA), pregnanolone, pregnenolone and allopregnanolone. In Homo sapiens (Human), this protein is Membrane progestin receptor alpha.